We begin with the raw amino-acid sequence, 443 residues long: Thymidine phosphorylase (443 aa).

The protein belongs to the thymidine/pyrimidine-nucleoside phosphorylase family. Homodimer.

It catalyses the reaction thymidine + phosphate = 2-deoxy-alpha-D-ribose 1-phosphate + thymine. The protein operates within pyrimidine metabolism; dTMP biosynthesis via salvage pathway; dTMP from thymine: step 1/2. The enzymes which catalyze the reversible phosphorolysis of pyrimidine nucleosides are involved in the degradation of these compounds and in their utilization as carbon and energy sources, or in the rescue of pyrimidine bases for nucleotide synthesis. This Shewanella sediminis (strain HAW-EB3) protein is Thymidine phosphorylase.